Consider the following 409-residue polypeptide: uncharacterized protein (409 aa).

The N-terminal stretch at 1–29 (MARSRCVHRVVHQAACIGVIGLSTSALTT) is a signal peptide. Cys30 is lipidated: N-palmitoyl cysteine. Cys30 is lipidated: S-diacylglycerol cysteine.

This sequence belongs to the TP013X lipoprotein family.

The protein resides in the cell membrane. This is an uncharacterized protein from Treponema pallidum (strain Nichols).